Consider the following 393-residue polypeptide: CCA-adding enzyme (393 aa).

Residues Gly27 and Arg30 each coordinate ATP. Gly27 and Arg30 together coordinate CTP. The Mg(2+) site is built by Asp40 and Asp42. Residues Arg111, Asp154, Arg157, Arg160, and Arg163 each contribute to the ATP site. CTP is bound by residues Arg111, Asp154, Arg157, Arg160, and Arg163.

The protein belongs to the tRNA nucleotidyltransferase/poly(A) polymerase family. Bacterial CCA-adding enzyme type 3 subfamily. As to quaternary structure, homodimer. The cofactor is Mg(2+).

The catalysed reaction is a tRNA precursor + 2 CTP + ATP = a tRNA with a 3' CCA end + 3 diphosphate. It catalyses the reaction a tRNA with a 3' CCA end + 2 CTP + ATP = a tRNA with a 3' CCACCA end + 3 diphosphate. In terms of biological role, catalyzes the addition and repair of the essential 3'-terminal CCA sequence in tRNAs without using a nucleic acid template. Adds these three nucleotides in the order of C, C, and A to the tRNA nucleotide-73, using CTP and ATP as substrates and producing inorganic pyrophosphate. tRNA 3'-terminal CCA addition is required both for tRNA processing and repair. Also involved in tRNA surveillance by mediating tandem CCA addition to generate a CCACCA at the 3' terminus of unstable tRNAs. While stable tRNAs receive only 3'-terminal CCA, unstable tRNAs are marked with CCACCA and rapidly degraded. The chain is CCA-adding enzyme from Listeria monocytogenes serovar 1/2a (strain ATCC BAA-679 / EGD-e).